The chain runs to 339 residues: Nucleoid-associated protein Asuc_0779 (339 aa).

This sequence belongs to the YejK family.

The protein resides in the cytoplasm. It is found in the nucleoid. The sequence is that of Nucleoid-associated protein Asuc_0779 from Actinobacillus succinogenes (strain ATCC 55618 / DSM 22257 / CCUG 43843 / 130Z).